The sequence spans 209 residues: Large ribosomal subunit protein uL3 (209 aa).

Residues Arg-141–Gly-163 are disordered.

Belongs to the universal ribosomal protein uL3 family. In terms of assembly, part of the 50S ribosomal subunit. Forms a cluster with proteins L14 and L19.

Functionally, one of the primary rRNA binding proteins, it binds directly near the 3'-end of the 23S rRNA, where it nucleates assembly of the 50S subunit. The chain is Large ribosomal subunit protein uL3 from Clostridium botulinum (strain Kyoto / Type A2).